We begin with the raw amino-acid sequence, 72 residues long: Translation initiation factor IF-1 (72 aa).

In terms of domain architecture, S1-like spans 2 to 72 (AKDDVIEVDG…TRGRITYRFK (71 aa)).

This sequence belongs to the IF-1 family. As to quaternary structure, component of the 30S ribosomal translation pre-initiation complex which assembles on the 30S ribosome in the order IF-2 and IF-3, IF-1 and N-formylmethionyl-tRNA(fMet); mRNA recruitment can occur at any time during PIC assembly.

Its subcellular location is the cytoplasm. Functionally, one of the essential components for the initiation of protein synthesis. Stabilizes the binding of IF-2 and IF-3 on the 30S subunit to which N-formylmethionyl-tRNA(fMet) subsequently binds. Helps modulate mRNA selection, yielding the 30S pre-initiation complex (PIC). Upon addition of the 50S ribosomal subunit IF-1, IF-2 and IF-3 are released leaving the mature 70S translation initiation complex. In Lactococcus lactis subsp. lactis (strain IL1403) (Streptococcus lactis), this protein is Translation initiation factor IF-1.